Here is a 306-residue protein sequence, read N- to C-terminus: Tyrosine recombinase XerC (306 aa).

The region spanning 1–90 is the Core-binding (CB) domain; it reads MYVHIDNFLV…AWRSFYRYLY (90 aa). The 188-residue stretch at 111–298 folds into the Tyr recombinase domain; the sequence is RLPRFLYEDE…TGERLKKVYR (188 aa). Active-site residues include Arg-151, Lys-175, His-250, Arg-253, and His-276. Catalysis depends on Tyr-285, which acts as the O-(3'-phospho-DNA)-tyrosine intermediate.

This sequence belongs to the 'phage' integrase family. XerC subfamily. As to quaternary structure, forms a cyclic heterotetrameric complex composed of two molecules of XerC and two molecules of XerD.

The protein resides in the cytoplasm. Functionally, site-specific tyrosine recombinase, which acts by catalyzing the cutting and rejoining of the recombining DNA molecules. The XerC-XerD complex is essential to convert dimers of the bacterial chromosome into monomers to permit their segregation at cell division. It also contributes to the segregational stability of plasmids. This chain is Tyrosine recombinase XerC, found in Pelotomaculum thermopropionicum (strain DSM 13744 / JCM 10971 / SI).